The primary structure comprises 439 residues: ATP-dependent protease ATPase subunit HslU (439 aa).

ATP contacts are provided by residues Ile-17, 59–64 (GVGKTE), Asp-251, Glu-317, and Arg-389.

Belongs to the ClpX chaperone family. HslU subfamily. A double ring-shaped homohexamer of HslV is capped on each side by a ring-shaped HslU homohexamer. The assembly of the HslU/HslV complex is dependent on binding of ATP.

Its subcellular location is the cytoplasm. In terms of biological role, ATPase subunit of a proteasome-like degradation complex; this subunit has chaperone activity. The binding of ATP and its subsequent hydrolysis by HslU are essential for unfolding of protein substrates subsequently hydrolyzed by HslV. HslU recognizes the N-terminal part of its protein substrates and unfolds these before they are guided to HslV for hydrolysis. The chain is ATP-dependent protease ATPase subunit HslU from Campylobacter jejuni (strain RM1221).